The primary structure comprises 357 residues: RNA 3'-terminal phosphate cyclase (357 aa).

Residues glutamine 102 and 293 to 296 contribute to the ATP site; that span reads HMGD. Residue histidine 319 is the Tele-AMP-histidine intermediate of the active site.

It belongs to the RNA 3'-terminal cyclase family. Type 1 subfamily.

The protein resides in the cytoplasm. The enzyme catalyses a 3'-end 3'-phospho-ribonucleotide-RNA + ATP = a 3'-end 2',3'-cyclophospho-ribonucleotide-RNA + AMP + diphosphate. Its function is as follows. Catalyzes the conversion of 3'-phosphate to a 2',3'-cyclic phosphodiester at the end of RNA. The mechanism of action of the enzyme occurs in 3 steps: (A) adenylation of the enzyme by ATP; (B) transfer of adenylate to an RNA-N3'P to produce RNA-N3'PP5'A; (C) and attack of the adjacent 2'-hydroxyl on the 3'-phosphorus in the diester linkage to produce the cyclic end product. The biological role of this enzyme is unknown but it is likely to function in some aspects of cellular RNA processing. The chain is RNA 3'-terminal phosphate cyclase from Staphylothermus marinus (strain ATCC 43588 / DSM 3639 / JCM 9404 / F1).